Reading from the N-terminus, the 411-residue chain is Dual-specificity RNA methyltransferase RlmN (411 aa).

Glu-125 acts as the Proton acceptor in catalysis. A Radical SAM core domain is found at 131 to 380 (EEGRGTLCIS…IRTPRGRDIL (250 aa)). Cysteines 138 and 383 form a disulfide. Residues Cys-145, Cys-149, and Cys-152 each coordinate [4Fe-4S] cluster. S-adenosyl-L-methionine contacts are provided by residues 209–210 (GE), Ser-241, 263–265 (SLH), and Asn-340. The active-site S-methylcysteine intermediate is Cys-383.

This sequence belongs to the radical SAM superfamily. RlmN family. It depends on [4Fe-4S] cluster as a cofactor.

The protein resides in the cytoplasm. It catalyses the reaction adenosine(2503) in 23S rRNA + 2 reduced [2Fe-2S]-[ferredoxin] + 2 S-adenosyl-L-methionine = 2-methyladenosine(2503) in 23S rRNA + 5'-deoxyadenosine + L-methionine + 2 oxidized [2Fe-2S]-[ferredoxin] + S-adenosyl-L-homocysteine. The enzyme catalyses adenosine(37) in tRNA + 2 reduced [2Fe-2S]-[ferredoxin] + 2 S-adenosyl-L-methionine = 2-methyladenosine(37) in tRNA + 5'-deoxyadenosine + L-methionine + 2 oxidized [2Fe-2S]-[ferredoxin] + S-adenosyl-L-homocysteine. Specifically methylates position 2 of adenine 2503 in 23S rRNA and position 2 of adenine 37 in tRNAs. m2A2503 modification seems to play a crucial role in the proofreading step occurring at the peptidyl transferase center and thus would serve to optimize ribosomal fidelity. In Brucella abortus (strain S19), this protein is Dual-specificity RNA methyltransferase RlmN.